The chain runs to 210 residues: MGFLKGTAAALTLLSAAAAASACGVLYEQCGGIGFDGVTCCSEGLMCMKMGPYYSQCRAMPGMMGQVKPYGQCGGMNYSGKTMCSPGFKCVELNEFFSQCDLANKSPVATPKVSPTSPPGPAQVCGKEYAACGGEMFMGAKCCKFGLVCYETSGKWQSQCRAPPPKMGEVGRYAQCGGMGYMGSTMCVGGYKCMAISEGSMYKQCLPMHP.

The N-terminal stretch at 1-22 (MGFLKGTAAALTLLSAAAAASA) is a signal peptide. CBM1 domains follow at residues 23–62 (CGVL…AMPG), 63–105 (MMGQ…LANK), 125–165 (CGKE…APPP), and 166–210 (KMGE…PMHP).

The polypeptide is Putative polysaccharide-binding protein (Porphyra purpurea (Red seaweed)).